A 140-amino-acid polypeptide reads, in one-letter code: 3-hydroxyacyl-[acyl-carrier-protein] dehydratase FabZ (140 aa).

The active site involves H47.

This sequence belongs to the thioester dehydratase family. FabZ subfamily.

Its subcellular location is the cytoplasm. The catalysed reaction is a (3R)-hydroxyacyl-[ACP] = a (2E)-enoyl-[ACP] + H2O. Functionally, involved in unsaturated fatty acids biosynthesis. Catalyzes the dehydration of short chain beta-hydroxyacyl-ACPs and long chain saturated and unsaturated beta-hydroxyacyl-ACPs. The protein is 3-hydroxyacyl-[acyl-carrier-protein] dehydratase FabZ of Streptococcus pneumoniae serotype 4 (strain ATCC BAA-334 / TIGR4).